A 256-amino-acid polypeptide reads, in one-letter code: Triosephosphate isomerase (256 aa).

12–14 (NWK) lines the substrate pocket. Residue His99 is the Electrophile of the active site. Catalysis depends on Glu171, which acts as the Proton acceptor. Residues Gly177, Ser217, and 238 to 239 (GG) each bind substrate.

This sequence belongs to the triosephosphate isomerase family. As to quaternary structure, homodimer.

It is found in the cytoplasm. It carries out the reaction D-glyceraldehyde 3-phosphate = dihydroxyacetone phosphate. It participates in carbohydrate biosynthesis; gluconeogenesis. It functions in the pathway carbohydrate degradation; glycolysis; D-glyceraldehyde 3-phosphate from glycerone phosphate: step 1/1. Functionally, involved in the gluconeogenesis. Catalyzes stereospecifically the conversion of dihydroxyacetone phosphate (DHAP) to D-glyceraldehyde-3-phosphate (G3P). The protein is Triosephosphate isomerase of Rubrobacter xylanophilus (strain DSM 9941 / JCM 11954 / NBRC 16129 / PRD-1).